A 426-amino-acid polypeptide reads, in one-letter code: Histidine--tRNA ligase (426 aa).

The protein belongs to the class-II aminoacyl-tRNA synthetase family. As to quaternary structure, homodimer.

Its subcellular location is the cytoplasm. It carries out the reaction tRNA(His) + L-histidine + ATP = L-histidyl-tRNA(His) + AMP + diphosphate + H(+). This Streptococcus agalactiae serotype III (strain NEM316) protein is Histidine--tRNA ligase.